A 355-amino-acid polypeptide reads, in one-letter code: Fructose-1,6-bisphosphatase (355 aa).

Residues 25–30 and 37–41 contribute to the AMP site; these read ILDQQH and TGEFS. 2 residues coordinate Mg(2+): Asp-78 and Glu-107. AMP is bound at residue 121 to 122; that stretch reads KY. Mg(2+)-binding residues include Asp-127, Ile-129, and Asp-130. 130–133 provides a ligand contact to substrate; the sequence is DGSS. An AMP-binding site is contributed by Lys-149. Residues 230-233, 263-268, Tyr-284, and 294-296 each bind substrate; these read NEGN, RYIGSM, and KLR. Mg(2+) is bound at residue Glu-300.

The protein belongs to the FBPase class 1 family. As to quaternary structure, homotetramer. It depends on Mg(2+) as a cofactor.

It catalyses the reaction beta-D-fructose 1,6-bisphosphate + H2O = beta-D-fructose 6-phosphate + phosphate. Its pathway is carbohydrate biosynthesis; gluconeogenesis. With respect to regulation, subject to complex allosteric regulation. The enzyme can assume an active R-state, or an inactive T-state. Intermediate conformations may exist. AMP acts as allosteric inhibitor. AMP binding affects the turnover of bound substrate and not the affinity for substrate. The protein is Fructose-1,6-bisphosphatase (FBP1) of Kluyveromyces lactis (strain ATCC 8585 / CBS 2359 / DSM 70799 / NBRC 1267 / NRRL Y-1140 / WM37) (Yeast).